Reading from the N-terminus, the 288-residue chain is Octanoyl-[GcvH]:protein N-octanoyltransferase (288 aa).

Residues 44 to 253 (AGGPPTFRLW…VLESAMGPQV (210 aa)) enclose the BPL/LPL catalytic domain. Cys-148 (acyl-thioester intermediate) is an active-site residue. The disordered stretch occupies residues 269 to 288 (GREGASETDPRRVAYGVDRP). Positions 272–288 (GASETDPRRVAYGVDRP) are enriched in basic and acidic residues.

It belongs to the octanoyltransferase LipL family.

The enzyme catalyses N(6)-octanoyl-L-lysyl-[glycine-cleavage complex H protein] + L-lysyl-[lipoyl-carrier protein] = N(6)-octanoyl-L-lysyl-[lipoyl-carrier protein] + L-lysyl-[glycine-cleavage complex H protein]. It functions in the pathway protein modification; protein lipoylation via endogenous pathway; protein N(6)-(lipoyl)lysine from octanoyl-[acyl-carrier-protein]. Functionally, catalyzes the amidotransfer (transamidation) of the octanoyl moiety from octanoyl-GcvH to the lipoyl domain of the E2 subunit of lipoate-dependent enzymes. The polypeptide is Octanoyl-[GcvH]:protein N-octanoyltransferase (Kyrpidia tusciae (strain DSM 2912 / NBRC 15312 / T2) (Bacillus tusciae)).